The sequence spans 383 residues: Izumo sperm-egg fusion protein 1 (383 aa).

The signal sequence occupies residues 1 to 21; that stretch reads MGLHFTLLLAALANCLCPARL. Disulfide bonds link C22–C149, C25–C152, C135–C159, C139–C165, and C182–C233. The Extracellular segment spans residues 22-306; the sequence is CIICDPFVVA…HRPEKKLKSR (285 aa). Residues 148–160 form an important for interaction with IZUMO1R region; that stretch reads WCNKCEKQMHFCR. Positions 167–251 constitute an Ig-like C2-type domain; it reads ERQIEVHRLE…PATIIYYHVT (85 aa). N204 carries N-linked (GlcNAc...) asparagine glycosylation. Residues 307–327 form a helical membrane-spanning segment; it reads LLILLILGFVVLVASVIASVL. Residues 328-383 lie on the Cytoplasmic side of the membrane; the sequence is HFRKTRVKSKNSNVENKTSAAEFKSEAESPQKMGSRKLSQAEFHTDSSDKVEEADN. The interval 335–383 is disordered; sequence KSKNSNVENKTSAAEFKSEAESPQKMGSRKLSQAEFHTDSSDKVEEADN. The span at 337–346 shows a compositional bias: polar residues; it reads KNSNVENKTS. Residues S339, S346, and S366 each carry the phosphoserine modification. Residues 370–383 show a composition bias toward basic and acidic residues; it reads FHTDSSDKVEEADN. T372 is modified (phosphothreonine).

Belongs to the Izumo family. In terms of assembly, monomer, homodimer; disulfide-linked and homooligomer; depending on the context. Interacts with IZUMO1R/JUNO. IZUMO1 and IZUMO1R/JUNO form a complex with 1:1 stoichiometry. In gamete recognition, IZUMO1R/JUNO first binds to monomeric IZUMO1. The weak, but specific interaction with IZUMO1R/JUNO induces IZUMO1 homodimerization. The process follows a tight binding phase where IZUMO1 bends the entire structure towards the sperm membrane side through a thiol-disulfide exchange reaction. The molecule no longer binds to IZUMO1R/JUNO and instead binds to a putative second oocyte receptor. Interacts with ACE3. Part of a oolemmal binding multimeric complex (IZUMO1 complex) composed at least of IZUMO1 and GLIPR1L1; the complex assemblage is influenced by the maturation status of the male germ cell. Interacts with GLIPR1L1. Interacts with FREY; the interaction retains IZUMO1 at the endoplasmic reticulum membrane and coordinates IZUMO1 complex assembly. Interacts with WDR54. Forms a complex with SPACA6 and TMEM81 on spermatocyte cell membrane. In terms of processing, N-glycosylated. Glycosylation is not essential for fusion and for proper protein trafficking in sperm. Phosphorylated. The cytoplasmic C-terminus is phosphorylated and undergoes phosphorylation changes during epididymal transit. As to expression, expressed in sperm (at protein level).

It is found in the cell membrane. It localises to the cytoplasmic vesicle. The protein resides in the secretory vesicle. Its subcellular location is the acrosome membrane. Its function is as follows. Essential sperm cell-surface protein required for fertilization by acting as a ligand for IZUMO1R/JUNO receptor on egg. The IZUMO1:IZUMO1R/JUNO interaction is a necessary adhesion event between sperm and egg that is required for fertilization but is not sufficient for cell fusion. The ligand-receptor interaction probably does not act as a membrane 'fusogen'. Plays a critical role in sperm-oolemma binding prior to plasma membrane fusion. Can mediate cell-cell fusion in cultured mammalian cells independently of its binding to IZUMO1R/JUNO. This Rattus norvegicus (Rat) protein is Izumo sperm-egg fusion protein 1.